We begin with the raw amino-acid sequence, 923 residues long: Periplasmic nitrate reductase (923 aa).

The segment at residues 1–30 (MNRRDFIKNTAIASAASVAGLSVPSSMLGA) is a signal peptide (tat-type signal). The 4Fe-4S Mo/W bis-MGD-type domain maps to 34–90 (WKWDKAVCRFCGTGCGIMIARKDGKIVATKGDPAAPVNRGLNCIKGYFNAKIMYGED). 4 residues coordinate [4Fe-4S] cluster: Cys-41, Cys-44, Cys-48, and Cys-76. Mo-bis(molybdopterin guanine dinucleotide) contacts are provided by residues Lys-78, Gln-146, Asn-171, Cys-175, 208 to 215 (WGANMAEM), Met-416, Gln-420, Asn-526, 551 to 552 (SD), Lys-574, Asp-601, and 813 to 822 (TGRVLEHWHS). Trp-889 contributes to the substrate binding site. Positions 897 and 914 each coordinate Mo-bis(molybdopterin guanine dinucleotide).

This sequence belongs to the prokaryotic molybdopterin-containing oxidoreductase family. NasA/NapA/NarB subfamily. In terms of assembly, component of the periplasmic nitrate reductase NapAB complex composed of NapA and NapB. [4Fe-4S] cluster is required as a cofactor. Requires Mo-bis(molybdopterin guanine dinucleotide) as cofactor. Predicted to be exported by the Tat system. The position of the signal peptide cleavage has not been experimentally proven.

The protein localises to the periplasm. It carries out the reaction 2 Fe(II)-[cytochrome] + nitrate + 2 H(+) = 2 Fe(III)-[cytochrome] + nitrite + H2O. Functionally, catalytic subunit of the periplasmic nitrate reductase complex NapAB. Receives electrons from NapB and catalyzes the reduction of nitrate to nitrite. This chain is Periplasmic nitrate reductase, found in Campylobacter jejuni subsp. jejuni serotype O:23/36 (strain 81-176).